The chain runs to 658 residues: Exoribonuclease 2 (658 aa).

The RNB domain occupies 189-530 (REDLTSLYFT…VNHRLIKQVL (342 aa)). The S1 motif domain occupies 576–658 (AVEFDCEIAD…ETRSIVGNII (83 aa)).

Belongs to the RNR ribonuclease family. RNase II subfamily.

It localises to the cytoplasm. It carries out the reaction Exonucleolytic cleavage in the 3'- to 5'-direction to yield nucleoside 5'-phosphates.. Its function is as follows. Involved in mRNA degradation. Hydrolyzes single-stranded polyribonucleotides processively in the 3' to 5' direction. The protein is Exoribonuclease 2 of Actinobacillus pleuropneumoniae serotype 3 (strain JL03).